Reading from the N-terminus, the 221-residue chain is Probable septum site-determining protein MinC (221 aa).

The protein belongs to the MinC family. Interacts with MinD and FtsZ.

Its function is as follows. Cell division inhibitor that blocks the formation of polar Z ring septums. Rapidly oscillates between the poles of the cell to destabilize FtsZ filaments that have formed before they mature into polar Z rings. Prevents FtsZ polymerization. This Shewanella sp. (strain ANA-3) protein is Probable septum site-determining protein MinC.